The following is a 118-amino-acid chain: Putative pterin-4-alpha-carbinolamine dehydratase (118 aa).

It belongs to the pterin-4-alpha-carbinolamine dehydratase family.

It catalyses the reaction (4aS,6R)-4a-hydroxy-L-erythro-5,6,7,8-tetrahydrobiopterin = (6R)-L-erythro-6,7-dihydrobiopterin + H2O. This is Putative pterin-4-alpha-carbinolamine dehydratase from Xanthomonas euvesicatoria pv. vesicatoria (strain 85-10) (Xanthomonas campestris pv. vesicatoria).